Consider the following 557-residue polypeptide: MAAQGFLLIATFLLVFMVLARPLGSGLARLINDIPLPGTTGVERVLFSALGVSDREMNWKQYLSAILGLNILGLAVLFFMLLGQHYLPLNPQQLPGLSWDLALNTAVSFVTNTNWQSYSGETTLSYFSQMAGLTVQNFLSAASGIAVIFALIRAFTRQSMNTLGNAWVDLLRITLWVLTPVALLIALFFIQQGALQNFLPYQAVTTIEGAQQLLPMGPVASQEAIKMLGTNGGGFFNANSSHPFENPTALTNFVQMLAIFLIPTALCFAFGEVAGDRRQGRMLLWAMSVIFVICVGVVMWAEVQGNPHLLALGADSSINMEGKESRFGVLVSSLFAVVTTAASCGAVIAMHDSFTALGGMVPMWLMQIGEVVFGGVGSGLYGMMLFVLLAVFIAGLMIGRTPEYLGKKIDVREMKLTALAILVTPTLVLMGAALAMMTDAGRSAMLNPGPHGFSEVLYAVSSAANNNGSAFAGLSANSPFWNCLLALCMFVGRFGVIIPVMAIAGSLVSKKSQPASSGTLPTHGPLFVGLLIGTVLLVGALTFIPALALGPVAEYLS.

12 helical membrane passes run 5 to 25 (GFLLIATFLLVFMVLARPLGS), 63 to 83 (LSAILGLNILGLAVLFFMLLG), 132 to 152 (GLTVQNFLSAASGIAVIFALI), 170 to 190 (LLRITLWVLTPVALLIALFFI), 253 to 273 (FVQMLAIFLIPTALCFAFGEV), 283 to 303 (LLWAMSVIFVICVGVVMWAEV), 329 to 349 (VLVSSLFAVVTTAASCGAVIA), 356 to 376 (ALGGMVPMWLMQIGEVVFGGV), 379 to 399 (GLYGMMLFVLLAVFIAGLMIG), 416 to 436 (LTALAILVTPTLVLMGAALAM), 484 to 504 (LLALCMFVGRFGVIIPVMAIA), and 526 to 546 (LFVGLLIGTVLLVGALTFIPA).

This sequence belongs to the KdpA family. In terms of assembly, the system is composed of three essential subunits: KdpA, KdpB and KdpC.

Its subcellular location is the cell inner membrane. Functionally, part of the high-affinity ATP-driven potassium transport (or Kdp) system, which catalyzes the hydrolysis of ATP coupled with the electrogenic transport of potassium into the cytoplasm. This subunit binds the periplasmic potassium ions and delivers the ions to the membrane domain of KdpB through an intramembrane tunnel. The sequence is that of Potassium-transporting ATPase potassium-binding subunit from Escherichia coli (strain UTI89 / UPEC).